Here is a 216-residue protein sequence, read N- to C-terminus: 3-isopropylmalate dehydratase small subunit (216 aa).

This sequence belongs to the LeuD family. LeuD type 1 subfamily. Heterodimer of LeuC and LeuD.

It carries out the reaction (2R,3S)-3-isopropylmalate = (2S)-2-isopropylmalate. It participates in amino-acid biosynthesis; L-leucine biosynthesis; L-leucine from 3-methyl-2-oxobutanoate: step 2/4. Functionally, catalyzes the isomerization between 2-isopropylmalate and 3-isopropylmalate, via the formation of 2-isopropylmaleate. This chain is 3-isopropylmalate dehydratase small subunit, found in Burkholderia mallei (strain NCTC 10247).